We begin with the raw amino-acid sequence, 446 residues long: 3-phosphoshikimate 1-carboxyvinyltransferase (446 aa).

Residues lysine 21, serine 22, and arginine 26 each contribute to the 3-phosphoshikimate site. Residue lysine 21 coordinates phosphoenolpyruvate. Phosphoenolpyruvate-binding residues include glycine 92 and arginine 120. 3-phosphoshikimate is bound by residues serine 165, glutamine 166, aspartate 308, and lysine 335. Residue glutamine 166 coordinates phosphoenolpyruvate. Residue aspartate 308 is the Proton acceptor of the active site. Positions 339, 380, and 406 each coordinate phosphoenolpyruvate.

This sequence belongs to the EPSP synthase family. As to quaternary structure, monomer.

It localises to the cytoplasm. It catalyses the reaction 3-phosphoshikimate + phosphoenolpyruvate = 5-O-(1-carboxyvinyl)-3-phosphoshikimate + phosphate. The protein operates within metabolic intermediate biosynthesis; chorismate biosynthesis; chorismate from D-erythrose 4-phosphate and phosphoenolpyruvate: step 6/7. Functionally, catalyzes the transfer of the enolpyruvyl moiety of phosphoenolpyruvate (PEP) to the 5-hydroxyl of shikimate-3-phosphate (S3P) to produce enolpyruvyl shikimate-3-phosphate and inorganic phosphate. In Chlamydia caviae (strain ATCC VR-813 / DSM 19441 / 03DC25 / GPIC) (Chlamydophila caviae), this protein is 3-phosphoshikimate 1-carboxyvinyltransferase.